Reading from the N-terminus, the 311-residue chain is Insulin-like growth factor-binding protein 2 (311 aa).

A signal peptide spans Met-1 to Pro-36. The IGFBP N-terminal domain maps to Val-38–Pro-120. Cystine bridges form between Cys-42–Cys-70, Cys-45–Cys-72, Cys-53–Cys-73, Cys-61–Cys-76, Cys-84–Cys-97, and Cys-91–Cys-117. Disordered regions lie at residues Gln-112–Thr-168 and Gly-188–Thr-210. The Thyroglobulin type-1 domain maps to Arg-209–Cys-291. 3 disulfides stabilise this stretch: Cys-212-Cys-246, Cys-257-Cys-268, and Cys-270-Cys-291. Residues Arg-286–Asp-288 carry the Cell attachment site motif.

In terms of assembly, binds IGF2 more than IGF1.

It localises to the secreted. Functionally, inhibits IGF-mediated growth and developmental rates. IGF-binding proteins prolong the half-life of the IGFs and have been shown to either inhibit or stimulate the growth promoting effects of the IGFs on cell culture. They alter the interaction of IGFs with their cell surface receptors. The sequence is that of Insulin-like growth factor-binding protein 2 (IGFBP2) from Gallus gallus (Chicken).